We begin with the raw amino-acid sequence, 138 residues long: Transcription antitermination protein NusB (138 aa).

Belongs to the NusB family.

Its function is as follows. Involved in transcription antitermination. Required for transcription of ribosomal RNA (rRNA) genes. Binds specifically to the boxA antiterminator sequence of the ribosomal RNA (rrn) operons. The protein is Transcription antitermination protein NusB of Helicobacter acinonychis (strain Sheeba).